The sequence spans 172 residues: Myosin regulatory light chain 2, smooth muscle major isoform (172 aa).

Residues 1–16 (MSSKRAKAKTTKKRPQ) show a composition bias toward basic residues. Residues 1-20 (MSSKRAKAKTTKKRPQRATS) are disordered. S2 carries the post-translational modification N-acetylserine. 3 consecutive EF-hand domains span residues 29–64 (SQIQEFKEAFNMIDQNRDGFIDKEDLHDMLASMGKN), 98–133 (DPEDVIRNAFACFDEEASGFIHEDHLRELLTTMGDR), and 134–169 (FTDEEVDEMYREAPIDKKGNFNYVEFTRILKHGAKD). D42, N44, D46, and D53 together coordinate Ca(2+).

Myosin is a hexamer of 2 heavy chains and 4 light chains.

Functionally, myosin regulatory subunit that plays an important role in regulation of both smooth muscle and nonmuscle cell contractile activity. Implicated in cytokinesis, receptor capping, and cell locomotion. This is Myosin regulatory light chain 2, smooth muscle major isoform from Gallus gallus (Chicken).